We begin with the raw amino-acid sequence, 90 residues long: Small ribosomal subunit protein bS16 (90 aa).

Belongs to the bacterial ribosomal protein bS16 family.

This chain is Small ribosomal subunit protein bS16, found in Streptococcus agalactiae serotype III (strain NEM316).